A 743-amino-acid chain; its full sequence is Beta-galactosidase (743 aa).

Glu-388 acts as the Proton donor in catalysis. Glu-453 (nucleophile) is an active-site residue.

Belongs to the glycosyl hydrolase 2 family. In terms of assembly, homodimer.

The enzyme catalyses Hydrolysis of terminal non-reducing beta-D-galactose residues in beta-D-galactosides.. Functionally, beta-galactosidase. This Thermoanaerobacter pseudethanolicus (strain ATCC 33223 / 39E) (Clostridium thermohydrosulfuricum) protein is Beta-galactosidase (lacZ).